The following is a 277-amino-acid chain: Photosystem I assembly factor PSA3, chloroplastic (277 aa).

Residues 1–45 (MVVVTHISTSFHQISPSFFHLRLRNPSTTSSSRPKLDGGFALSIR) constitute a chloroplast transit peptide.

Interacts with PYG7.

The protein localises to the plastid. The protein resides in the chloroplast. It is found in the chloroplast thylakoid membrane. Nuclear genome-encoded factor required for the accumulation of photosystem I (PSI). Functions as a PSI biogenesis factor. Cooperates with PYG7 to promote the stable assembly of PSI in the thylakoid membrane. May target primarily the PsaC subunit. Does not seem to be required for the expression of chloroplast genes encoding PSI subunits. In Arabidopsis thaliana (Mouse-ear cress), this protein is Photosystem I assembly factor PSA3, chloroplastic.